Here is a 316-residue protein sequence, read N- to C-terminus: Ribosomal RNA small subunit methyltransferase H (316 aa).

S-adenosyl-L-methionine-binding positions include A32–H34, D52, F79, D100, and Q107.

It belongs to the methyltransferase superfamily. RsmH family.

Its subcellular location is the cytoplasm. It carries out the reaction cytidine(1402) in 16S rRNA + S-adenosyl-L-methionine = N(4)-methylcytidine(1402) in 16S rRNA + S-adenosyl-L-homocysteine + H(+). In terms of biological role, specifically methylates the N4 position of cytidine in position 1402 (C1402) of 16S rRNA. The protein is Ribosomal RNA small subunit methyltransferase H of Lysinibacillus sphaericus (strain C3-41).